Consider the following 472-residue polypeptide: MPPTIHRNLLSPELVQWALKIEKDSRLTARGALAVMSYAKTGRSPLDKRIVDTDDVRENVDWGKVNMKLSEESFARVRKIAKEFLDTREHLFVVDCFAGHDERYRLKVRVFTTRPYHALFMRDMLIVPTPEELATFGEPDYVIYNAGECKADPSIPGLTSTTCVALNFKTREQVILGTEYAGEMKKGILTVMFELMPQMNHLCMHASANVGKQGDVTVFFGLSGTGKTTLSADPHRNLIGDDEHVWTDRGVFNIEGGCYAKAIGLNPKTEKDIYDAVRFGAVAENCVLDKRTGEIDFYDESICKNTRVAYPLSHIEGALSKAIAGHPKNVIFLTNDAFGVMPPVARLTSAQAMFWFVMGYTANVPGVEAGGTRTARPIFSSCFGGPFLVRHATFYGEQLAEKMQKHNSRVWLLNTGYAGGRADRGAKRMPLRVTRAIIDAIHDGTLDRTEYEEYPGWACTSRSTSPKCRSIC.

Gly-221–Thr-228 contacts ATP.

Belongs to the phosphoenolpyruvate carboxykinase (ATP) family. Homodimer.

It is found in the glycosome. The catalysed reaction is oxaloacetate + ATP = phosphoenolpyruvate + ADP + CO2. It participates in carbohydrate biosynthesis; gluconeogenesis. This is Phosphoenolpyruvate carboxykinase (ATP), glycosomal (PEPCK) from Trypanosoma cruzi.